Reading from the N-terminus, the 67-residue chain is ATP synthase F(0) complex subunit 8 (67 aa).

A helical transmembrane segment spans residues 8-24; sequence TWLIMILSMILTLFITF. Lysine 54 carries the post-translational modification N6-acetyllysine; alternate. At lysine 54 the chain carries N6-succinyllysine; alternate. Residue lysine 57 is modified to N6-acetyllysine.

It belongs to the ATPase protein 8 family. Component of the ATP synthase complex composed at least of ATP5F1A/subunit alpha, ATP5F1B/subunit beta, ATP5MC1/subunit c (homooctomer), MT-ATP6/subunit a, MT-ATP8/subunit 8, ATP5ME/subunit e, ATP5MF/subunit f, ATP5MG/subunit g, ATP5MK/subunit k, ATP5MJ/subunit j, ATP5F1C/subunit gamma, ATP5F1D/subunit delta, ATP5F1E/subunit epsilon, ATP5PF/subunit F6, ATP5PB/subunit b, ATP5PD/subunit d, ATP5PO/subunit OSCP. ATP synthase complex consists of a soluble F(1) head domain (subunits alpha(3) and beta(3)) - the catalytic core - and a membrane F(0) domain - the membrane proton channel (subunits c, a, 8, e, f, g, k and j). These two domains are linked by a central stalk (subunits gamma, delta, and epsilon) rotating inside the F1 region and a stationary peripheral stalk (subunits F6, b, d, and OSCP). Interacts with PRICKLE3.

The protein resides in the mitochondrion membrane. Subunit 8, of the mitochondrial membrane ATP synthase complex (F(1)F(0) ATP synthase or Complex V) that produces ATP from ADP in the presence of a proton gradient across the membrane which is generated by electron transport complexes of the respiratory chain. ATP synthase complex consist of a soluble F(1) head domain - the catalytic core - and a membrane F(1) domain - the membrane proton channel. These two domains are linked by a central stalk rotating inside the F(1) region and a stationary peripheral stalk. During catalysis, ATP synthesis in the catalytic domain of F(1) is coupled via a rotary mechanism of the central stalk subunits to proton translocation. In vivo, can only synthesize ATP although its ATP hydrolase activity can be activated artificially in vitro. Part of the complex F(0) domain. This chain is ATP synthase F(0) complex subunit 8, found in Phoca vitulina (Harbor seal).